A 694-amino-acid polypeptide reads, in one-letter code: Elongation factor G (694 aa).

A tr-type G domain is found at 8–285 (EKVRNIGIAA…AVVELLPSPQ (278 aa)). GTP is bound by residues 17-24 (AHIDAGKT), 81-85 (DTPGH), and 135-138 (NKMD).

The protein belongs to the TRAFAC class translation factor GTPase superfamily. Classic translation factor GTPase family. EF-G/EF-2 subfamily.

The protein resides in the cytoplasm. Functionally, catalyzes the GTP-dependent ribosomal translocation step during translation elongation. During this step, the ribosome changes from the pre-translocational (PRE) to the post-translocational (POST) state as the newly formed A-site-bound peptidyl-tRNA and P-site-bound deacylated tRNA move to the P and E sites, respectively. Catalyzes the coordinated movement of the two tRNA molecules, the mRNA and conformational changes in the ribosome. The polypeptide is Elongation factor G (fusA) (Synechococcus sp. (strain ATCC 27144 / PCC 6301 / SAUG 1402/1) (Anacystis nidulans)).